Reading from the N-terminus, the 262-residue chain is Acyl-[acyl-carrier-protein]--UDP-N-acetylglucosamine O-acyltransferase (262 aa).

It belongs to the transferase hexapeptide repeat family. LpxA subfamily. In terms of assembly, homotrimer.

It localises to the cytoplasm. The enzyme catalyses a (3R)-hydroxyacyl-[ACP] + UDP-N-acetyl-alpha-D-glucosamine = a UDP-3-O-[(3R)-3-hydroxyacyl]-N-acetyl-alpha-D-glucosamine + holo-[ACP]. It functions in the pathway glycolipid biosynthesis; lipid IV(A) biosynthesis; lipid IV(A) from (3R)-3-hydroxytetradecanoyl-[acyl-carrier-protein] and UDP-N-acetyl-alpha-D-glucosamine: step 1/6. Involved in the biosynthesis of lipid A, a phosphorylated glycolipid that anchors the lipopolysaccharide to the outer membrane of the cell. The polypeptide is Acyl-[acyl-carrier-protein]--UDP-N-acetylglucosamine O-acyltransferase (Vibrio atlanticus (strain LGP32) (Vibrio splendidus (strain Mel32))).